We begin with the raw amino-acid sequence, 634 residues long: RING finger protein 207 (634 aa).

The segment at 25–63 (CHLCQEQYEHPCLLDCYHTFCASCLRGRVADSRLTCPVC) adopts an RING-type zinc-finger fold. The B box-type; atypical zinc-finger motif lies at 93–145 (EETVQCANCDLECKKQDVDAMYYCNTCCQPLCRDCRETTHKAKMFSRHEIVSL). Zn(2+) is bound by residues Cys-98, Cys-101, Cys-127, and His-132. Residues 575–634 (YEDSTSTADTQPSNELSCNTEDNWTLNSLSEETNPKNKDYYRTNKQKNTTDSTNRKEIPM) are disordered. The span at 577–606 (DSTSTADTQPSNELSCNTEDNWTLNSLSEE) shows a compositional bias: polar residues. Basic and acidic residues predominate over residues 607 to 616 (TNPKNKDYYR).

The protein localises to the cytoplasm. In terms of biological role, plays a role in cardiac repolarization possibly by stabilizing membrane expression of the potassium channel kcnh6a/zerg, or by assisting its synthesis, folding or export from the endoplasmic reticulum, in a heat shock protein-dependent manner. This Danio rerio (Zebrafish) protein is RING finger protein 207 (rnf207b).